We begin with the raw amino-acid sequence, 308 residues long: CD276 antigen homolog (308 aa).

A signal peptide spans 1–15 (MAALCLLLLLSLAEA). The Extracellular segment spans residues 16–236 (IDLRVPELPV…VTGQHLSFPP (221 aa)). One can recognise an Ig-like V-type domain in the interval 21-125 (PELPVIGLLD…VQNSSSASVS (105 aa)). Intrachain disulfides connect cysteine 37–cysteine 112 and cysteine 155–cysteine 210. The Ig-like C2-type domain maps to 135-228 (PTLHLEPSEA…DVTHASLTVT (94 aa)). The chain crosses the membrane as a helical span at residues 237-257 (LVLWVTVGLSICLLCLLVALA). Residues 258 to 308 (CVCRKHLKQTCEEEQENAGNEEHEENGELKTAMQPLKVTSPGEDDDAECLE) lie on the Cytoplasmic side of the membrane. The tract at residues 270-308 (EEQENAGNEEHEENGELKTAMQPLKVTSPGEDDDAECLE) is disordered. A compositionally biased stretch (acidic residues) spans 299-308 (GEDDDAECLE).

It belongs to the immunoglobulin superfamily. BTN/MOG family.

The protein localises to the membrane. In terms of biological role, modulates immune responses. The protein is CD276 antigen homolog (cd276) of Xenopus laevis (African clawed frog).